Here is a 292-residue protein sequence, read N- to C-terminus: F-box protein SKIP28 (292 aa).

The F-box; degenerate domain maps to L21–S79.

As to quaternary structure, part of a SCF (ASK-cullin-F-box) protein ligase complex. Interacts with SKP1A/ASK1 and CUL1.

The protein operates within protein modification; protein ubiquitination. Its function is as follows. Component of SCF(ASK-cullin-F-box) E3 ubiquitin ligase complexes, which may mediate the ubiquitination and subsequent proteasomal degradation of target proteins. Required during the endosperm development in embryos. The sequence is that of F-box protein SKIP28 (SKIP28) from Arabidopsis thaliana (Mouse-ear cress).